Consider the following 513-residue polypeptide: Cyclin-dependent kinase C-2 (513 aa).

Positions 25-325 constitute a Protein kinase domain; it reads FEKLEQIGEG…AKDALDAEYF (301 aa). ATP contacts are provided by residues 31-39 and K54; that span reads IGEGTYGQV. T35 is subject to Phosphothreonine. The residue at position 36 (Y36) is a Phosphotyrosine. The active-site Proton acceptor is the D164. S191 is subject to Phosphoserine. T198 bears the Phosphothreonine mark. Residues 336-348 show a composition bias toward basic and acidic residues; that stretch reads SLPKYEASHEFQT. The disordered stretch occupies residues 336-513; that stretch reads SLPKYEASHE…RNQQQYGNWQ (178 aa). Residues 417–433 are compositionally biased toward low complexity; the sequence is PNRYPQGGNQGGYNPNR. Gly residues-rich tracts occupy residues 457–478 and 485–494; these read GGGM…GVGG and GPYGASGPGR. Polar residues predominate over residues 497–513; it reads NYNQGGSRNQQQYGNWQ.

This sequence belongs to the protein kinase superfamily. CMGC Ser/Thr protein kinase family. CDC2/CDKX subfamily.

The catalysed reaction is L-seryl-[protein] + ATP = O-phospho-L-seryl-[protein] + ADP + H(+). It catalyses the reaction L-threonyl-[protein] + ATP = O-phospho-L-threonyl-[protein] + ADP + H(+). The enzyme catalyses [DNA-directed RNA polymerase] + ATP = phospho-[DNA-directed RNA polymerase] + ADP + H(+). The polypeptide is Cyclin-dependent kinase C-2 (CDKC-2) (Oryza sativa subsp. japonica (Rice)).